The following is a 416-amino-acid chain: UDP-N-acetylglucosamine 1-carboxyvinyltransferase (416 aa).

22-23 (KN) lines the phosphoenolpyruvate pocket. R91 is a binding site for UDP-N-acetyl-alpha-D-glucosamine. C115 functions as the Proton donor in the catalytic mechanism. C115 is modified (2-(S-cysteinyl)pyruvic acid O-phosphothioketal). Residues 120–124 (RPIDL), D305, and I327 contribute to the UDP-N-acetyl-alpha-D-glucosamine site.

The protein belongs to the EPSP synthase family. MurA subfamily.

It is found in the cytoplasm. The enzyme catalyses phosphoenolpyruvate + UDP-N-acetyl-alpha-D-glucosamine = UDP-N-acetyl-3-O-(1-carboxyvinyl)-alpha-D-glucosamine + phosphate. It functions in the pathway cell wall biogenesis; peptidoglycan biosynthesis. Its function is as follows. Cell wall formation. Adds enolpyruvyl to UDP-N-acetylglucosamine. This Buchnera aphidicola subsp. Acyrthosiphon pisum (strain APS) (Acyrthosiphon pisum symbiotic bacterium) protein is UDP-N-acetylglucosamine 1-carboxyvinyltransferase.